A 561-amino-acid chain; its full sequence is Centromere protein T (561 aa).

The tract at residues 1–78 is disordered; that stretch reads MADHNPDGDP…IGRSAHVQAR (78 aa). Residues 18-27 are compositionally biased toward basic and acidic residues; that stretch reads RVLDTADPRT. Residues 45–57 show a composition bias toward polar residues; it reads TASSRRLSGQTKT. Ser-47 is subject to Phosphoserine. A Phosphothreonine modification is found at Thr-85. Positions 93-421 are flexible stalk domain; sequence ILLTAPESSI…RHHQFPEPAP (329 aa). Disordered regions lie at residues 114 to 134, 256 to 293, and 314 to 457; these read APQVVQPSRRESSRGSLELQL, HSLPCTPHTGAEDAEQAAGRRTQSSGPGLQNNSPGKPA, and SSGV…DPHK. Over residues 276–289 the composition is skewed to polar residues; sequence RTQSSGPGLQNNSP. A compositionally biased stretch (basic and acidic residues) spans 329–341; it reads GVEEAEKKMKEEG. Ser-343, Ser-345, Ser-356, Ser-373, Ser-385, Ser-386, and Ser-397 each carry phosphoserine. Residues 365–376 show a composition bias toward polar residues; sequence TQVTEAEGSQGT. Residues 439–450 show a composition bias toward low complexity; sequence RCPPRSRTTGPR.

Belongs to the CENP-T/CNN1 family. In terms of assembly, component of the CENPA-CAD complex, composed of CENPI, CENPK, CENPL, CENPO, CENPP, CENPQ, CENPR and CENPS. The CENPA-CAD complex is probably recruited on centromeres by the CENPA-NAC complex, at least composed of CENPA, CENPC, CENPH, CENPM, CENPN, CENPT and CENPU. Identified in a centromeric complex containing histones H2A, H2B, H3 and H4, and at least CENPA, CENPB, CENPC, CENPT, CENPN, HJURP, SUPT16H, SSRP1 and RSF1. Interacts (via N-terminus) with the NDC80 complex. Heterodimer with CENPW; this dimer coassembles with CENPS-CENPX heterodimers at centromeres to form the tetrameric CENP-T-W-S-X complex. Post-translationally, dynamically phosphorylated during the cell cycle. Phosphorylated during G2 phase, metaphase and anaphase, but not during telophase or G1 phase.

Its subcellular location is the nucleus. The protein resides in the chromosome. It localises to the centromere. It is found in the kinetochore. Component of the CENPA-NAC (nucleosome-associated) complex, a complex that plays a central role in assembly of kinetochore proteins, mitotic progression and chromosome segregation. The CENPA-NAC complex recruits the CENPA-CAD (nucleosome distal) complex and may be involved in incorporation of newly synthesized CENPA into centromeres. Part of a nucleosome-associated complex that binds specifically to histone H3-containing nucleosomes at the centromere, as opposed to nucleosomes containing CENPA. Component of the heterotetrameric CENP-T-W-S-X complex that binds and supercoils DNA, and plays an important role in kinetochore assembly. CENPT has a fundamental role in kinetochore assembly and function. It is one of the inner kinetochore proteins, with most further proteins binding downstream. Required for normal chromosome organization and normal progress through mitosis. This is Centromere protein T (CENPT) from Macaca fascicularis (Crab-eating macaque).